We begin with the raw amino-acid sequence, 31 residues long: Photosystem I reaction center subunit XII (31 aa).

A helical membrane pass occupies residues 7–26; it reads QVFLALIIALIPGILADRLG.

This sequence belongs to the PsaM family.

It is found in the plastid. It localises to the chloroplast thylakoid membrane. The polypeptide is Photosystem I reaction center subunit XII (Euglena deses).